The sequence spans 201 residues: Recombination protein RecR (201 aa).

Residues 60–75 (CSVCGNVDSCDPCTIC) form a C4-type zinc finger. A Toprim domain is found at 83–178 (STLIVVETVG…RTTRLAHGVP (96 aa)).

Belongs to the RecR family.

Functionally, may play a role in DNA repair. It seems to be involved in an RecBC-independent recombinational process of DNA repair. It may act with RecF and RecO. In Methylocella silvestris (strain DSM 15510 / CIP 108128 / LMG 27833 / NCIMB 13906 / BL2), this protein is Recombination protein RecR.